A 719-amino-acid chain; its full sequence is 1,4-alpha-glucan branching enzyme GlgB (719 aa).

Catalysis depends on D400, which acts as the Nucleophile. Residue E453 is the Proton donor of the active site.

It belongs to the glycosyl hydrolase 13 family. GlgB subfamily. As to quaternary structure, monomer.

The catalysed reaction is Transfers a segment of a (1-&gt;4)-alpha-D-glucan chain to a primary hydroxy group in a similar glucan chain.. Its pathway is glycan biosynthesis; glycogen biosynthesis. Its function is as follows. Catalyzes the formation of the alpha-1,6-glucosidic linkages in glycogen by scission of a 1,4-alpha-linked oligosaccharide from growing alpha-1,4-glucan chains and the subsequent attachment of the oligosaccharide to the alpha-1,6 position. The sequence is that of 1,4-alpha-glucan branching enzyme GlgB from Chlamydia caviae (strain ATCC VR-813 / DSM 19441 / 03DC25 / GPIC) (Chlamydophila caviae).